The primary structure comprises 550 residues: Methyl-coenzyme M reductase I subunit alpha (550 aa).

Gln147 is a binding site for coenzyme F430. Coenzyme B contacts are provided by residues Arg225, 256 to 257 (KH), and Arg270. His257 bears the Pros-methylhistidine mark. A 5-methylarginine modification is found at Arg271. Tyr333 is a binding site for coenzyme M. 2-methylglutamine is present on Gln400. Tyr444 is a binding site for coenzyme M. Gly445 carries the 1-thioglycine modification. (Z)-2,3-didehydroaspartate is present on Asp450. Cys452 carries the S-methylcysteine modification.

This sequence belongs to the methyl-coenzyme M reductase alpha subunit family. In terms of assembly, MCR is a hexamer of two alpha, two beta, and two gamma chains, forming a dimer of heterotrimers. Requires coenzyme F430 as cofactor. In terms of processing, the alpha subunit contains six modified amino acids near the active site region. Is methylated on His-257, Arg-271, Gln-400 and Cys-452, probably by the action of specific S-adenosylmethionine-dependent methyltransferases. Also contains a thioglycine at position 445, forming a thiopeptide bond. Contains a didehydroaspartate residue at position 450. The methylation on C5 of Arg-271 is a post-translational methylation not essential in vivo, but which plays a role for the stability and structural integrity of MCR.

It is found in the cytoplasm. It carries out the reaction coenzyme B + methyl-coenzyme M = methane + coenzyme M-coenzyme B heterodisulfide. Its pathway is one-carbon metabolism; methyl-coenzyme M reduction; methane from methyl-coenzyme M: step 1/1. Its activity is regulated as follows. Methyl-coenzyme M reductase activity is inhibited by 3-nitrooxypropanol (3-NOP) in vitro and in vivo, by oxidation of its active site Ni(I), which stops both growth and methanogenesis. Is also inhibited by the reaction product CoM-S-S-CoB. Functionally, component of the methyl-coenzyme M reductase (MCR) I that catalyzes the reductive cleavage of methyl-coenzyme M (CoM-S-CH3 or 2-(methylthio)ethanesulfonate) using coenzyme B (CoB or 7-mercaptoheptanoylthreonine phosphate) as reductant which results in the production of methane and the mixed heterodisulfide of CoB and CoM (CoM-S-S-CoB). This is the final step in methanogenesis. Neither N-6-mercaptohexanoylthreonine phosphate (H-S-HxoTP) nor N-8-mercaptooctanoylthreonine phosphate (H-SOcoTP) nor any other thiol compound such as CoA or CoM can substitute for CoB as the electron donor. This chain is Methyl-coenzyme M reductase I subunit alpha (mcrA), found in Methanothermobacter marburgensis (strain ATCC BAA-927 / DSM 2133 / JCM 14651 / NBRC 100331 / OCM 82 / Marburg) (Methanobacterium thermoautotrophicum).